The primary structure comprises 1116 residues: Error-prone DNA polymerase 1 (1116 aa).

This sequence belongs to the DNA polymerase type-C family. DnaE2 subfamily.

The protein localises to the cytoplasm. The enzyme catalyses DNA(n) + a 2'-deoxyribonucleoside 5'-triphosphate = DNA(n+1) + diphosphate. Functionally, DNA polymerase involved in damage-induced mutagenesis and translesion synthesis (TLS). It is not the major replicative DNA polymerase. In Rhizobium meliloti (strain 1021) (Ensifer meliloti), this protein is Error-prone DNA polymerase 1.